The primary structure comprises 84 residues: uncharacterized protein (84 aa).

This is an uncharacterized protein from Orgyia pseudotsugata (Douglas-fir tussock moth).